We begin with the raw amino-acid sequence, 254 residues long: L-rhamnose 1-dehydrogenase (NAD(P)(+)) (254 aa).

Positions 13, 15, 18, 64, 65, and 91 each coordinate NADP(+). Serine 144 acts as the Proton donor in catalysis. Beta-L-rhamnose contacts are provided by serine 144, serine 146, glutamine 154, and tyrosine 157. Tyrosine 157 and lysine 161 together coordinate NADP(+). Residue tyrosine 157 is the Proton acceptor of the active site. Lysine 161 (lowers pKa of active site Tyr) is an active-site residue. Threonine 189 provides a ligand contact to beta-L-rhamnose. Isoleucine 190 contributes to the NADP(+) binding site. Asparagine 195 is a binding site for beta-L-rhamnose.

This sequence belongs to the short-chain dehydrogenases/reductases (SDR) family.

The catalysed reaction is L-rhamnofuranose + NAD(+) = L-rhamnono-1,4-lactone + NADH + H(+). The enzyme catalyses L-rhamnofuranose + NADP(+) = L-rhamnono-1,4-lactone + NADPH + H(+). Its pathway is carbohydrate degradation; L-rhamnose degradation. In terms of biological role, NAD(P)-dependent dehydrogenase that catalyzes the oxidation of L-rhamnose to L-rhamnono-1,4-lactone. Also shows high activity with L-lyxose and low activity with L-mannose. Can utilize either NAD(+) or NADP(+), with a slight preference for NADP(+). Catalyzes the first step in an alternative pathway for rhamnose utilization that does not involve phosphorylated intermediates. This chain is L-rhamnose 1-dehydrogenase (NAD(P)(+)), found in Sphingomonas sp. (strain SKA58).